The following is a 192-amino-acid chain: ATP-dependent Clp protease proteolytic subunit 1 (192 aa).

Residue Ser92 is the Nucleophile of the active site. The active site involves His117.

The protein belongs to the peptidase S14 family. As to quaternary structure, fourteen ClpP subunits assemble into 2 heptameric rings which stack back to back to give a disk-like structure with a central cavity, resembling the structure of eukaryotic proteasomes.

The protein resides in the cytoplasm. It catalyses the reaction Hydrolysis of proteins to small peptides in the presence of ATP and magnesium. alpha-casein is the usual test substrate. In the absence of ATP, only oligopeptides shorter than five residues are hydrolyzed (such as succinyl-Leu-Tyr-|-NHMec, and Leu-Tyr-Leu-|-Tyr-Trp, in which cleavage of the -Tyr-|-Leu- and -Tyr-|-Trp bonds also occurs).. Its function is as follows. Cleaves peptides in various proteins in a process that requires ATP hydrolysis. Has a chymotrypsin-like activity. Plays a major role in the degradation of misfolded proteins. The protein is ATP-dependent Clp protease proteolytic subunit 1 of Chlamydia muridarum (strain MoPn / Nigg).